A 1544-amino-acid chain; its full sequence is Lysine-specific demethylase 5B (1544 aa).

The JmjN domain occupies 32-73 (CPVFEPSWEEFADPFAFIHKIRPIAEQTGICKVRPPPDWQPP). An ARID domain is found at 97-187 (TRVKLNFLDQ…ILNPYNLFLS (91 aa)). Residues Lys148, Lys204, Lys209, Lys242, Lys274, and Lys278 each participate in a glycyl lysine isopeptide (Lys-Gly) (interchain with G-Cter in SUMO2) cross-link. Residues 201–230 (TDTKDKEYKPHDIPQRQSVQPSETCPPARR) form a disordered region. The span at 202 to 214 (DTKDKEYKPHDIP) shows a compositional bias: basic and acidic residues. Residues 309–359 (LYVCLLCGSGNDEDRLLLCDGCDDSYHTFCLIPPLHDVPKGDWRCPKCLAQ) form a PHD-type 1 zinc finger. Tyr425 serves as a coordination point for 2-oxoglutarate. The JmjC domain maps to 453-619 (EYLDSGWNLN…LGRQCVEHYR (167 aa)). Fe cation is bound by residues His499 and Glu501. 2-oxoglutarate-binding residues include Ser507, Asn509, and Lys517. His587 contributes to the Fe cation binding site. The C5HC2 zinc finger occupies 692-744 (CVKCKTTCFMSAISCSCKPGLLVCLHHVKELCSCPPYKYKLRYRYTLDDLYPM). Lys769 is covalently cross-linked (Glycyl lysine isopeptide (Lys-Gly) (interchain with G-Cter in SUMO2)). The residue at position 832 (Lys832) is an N6-acetyllysine. Phosphoserine is present on Ser986. A PHD-type 2 zinc finger spans residues 1176–1224 (IKICLCQKAPAAPMIQCELCRDAFHTSCVAVPSISQGLRIWLCPHCRRS). Ser1328 carries the phosphoserine modification. A disordered region spans residues 1374 to 1400 (PSPAQQTDRSSPVRPSSEKNDCCRGKR). The segment covering 1376–1387 (PAQQTDRSSPVR) has biased composition (polar residues). The span at 1389–1400 (SSEKNDCCRGKR) shows a compositional bias: basic and acidic residues. Lys1450 participates in a covalent cross-link: Glycyl lysine isopeptide (Lys-Gly) (interchain with G-Cter in SUMO2). Ser1456 bears the Phosphoserine mark. Residues 1484–1538 (DAICPAVSCLQPEGDEVDWVQCDGSCNQWFHQVCVGVSPEMAEKEDYICVRCTVK) form a PHD-type 3 zinc finger.

This sequence belongs to the JARID1 histone demethylase family. In terms of assembly, interacts with FOXG1B, PAX9, MYC, MYCN and RB1. Interacts with HDAC1, HDAC4, HDAC5 and HDAC7. Interacts (via PHD-type 1 zinc finger) with histone H3 unmodified at 'Lys-4'; the interaction is inhibited when histone H3 is methylated at 'Arg-2' or 'Lys-4'. It depends on Fe(2+) as a cofactor. As to expression, ubiquitously expressed, with highest levels in testis. Down-regulated in melanoma and glioblastoma. Up-regulated in breast cancer (at protein level).

The protein localises to the nucleus. The catalysed reaction is N(6),N(6),N(6)-trimethyl-L-lysyl(4)-[histone H3] + 3 2-oxoglutarate + 3 O2 = L-lysyl(4)-[histone H3] + 3 formaldehyde + 3 succinate + 3 CO2. Its activity is regulated as follows. Several specific inhibitors are being developed and tested. The inhibitor KDOAM-25 inhibits its demethylase activity, resulting to cell cycle arrest in myeloma cells. Its function is as follows. Histone demethylase that demethylates 'Lys-4' of histone H3, thereby playing a central role in histone code. Does not demethylate histone H3 'Lys-9' or H3 'Lys-27'. Demethylates trimethylated, dimethylated and monomethylated H3 'Lys-4'. Acts as a transcriptional corepressor for FOXG1B and PAX9. Favors the proliferation of breast cancer cells by repressing tumor suppressor genes such as BRCA1 and HOXA5. In contrast, may act as a tumor suppressor for melanoma. Represses the CLOCK-BMAL1 heterodimer-mediated transcriptional activation of the core clock component PER2. The protein is Lysine-specific demethylase 5B (KDM5B) of Homo sapiens (Human).